Consider the following 1804-residue polypeptide: Vacuolar membrane-associated protein IML1 (1804 aa).

The span at 1 to 13 (MFSALRSKNQSNK) shows a compositional bias: polar residues. 4 disordered regions span residues 1 to 65 (MFSA…TENE), 169 to 204 (NNGN…PQSI), 723 to 797 (TTIH…TFHP), and 866 to 892 (ESQS…ERRN). Residues 14–27 (RSNDDSINSRKDVN) are compositionally biased toward basic and acidic residues. Composition is skewed to polar residues over residues 185 to 204 (YTSS…PQSI) and 723 to 749 (TTIH…NNSI). Residues 779 to 789 (LSDKSTFEKQF) show a composition bias toward basic and acidic residues. Polar residues predominate over residues 866 to 878 (ESQSNDNELNENS). A compositionally biased stretch (basic and acidic residues) spans 879–892 (KLPERGGGTDERRN). The region spanning 1414 to 1489 (GENKLNLVTR…DGNYFYQISP (76 aa)) is the DEP domain. Residues 1501-1528 (TNSKNSNTSDNNTLKKTTSRNSTESNLT) form a disordered region. Low complexity predominate over residues 1503–1516 (SKNSNTSDNNTLKK).

Belongs to the IML1 family.

It is found in the vacuole membrane. The sequence is that of Vacuolar membrane-associated protein IML1 (IML1) from Candida glabrata (strain ATCC 2001 / BCRC 20586 / JCM 3761 / NBRC 0622 / NRRL Y-65 / CBS 138) (Yeast).